A 255-amino-acid chain; its full sequence is MTCALQPGRPSGGAPWTAEPAAFYEPGRAGKPGRGAEPAAPAMYDDESAIDFSAYIDSMAAVPTLELCHDELFADLFNSNHKAGALELLPGGPARLGGPGPAPRPLKREPDWGDGDAPGSLLPAQVAACAQTVVSLAPAAQPTPPASPDPPRRSPAPPAPGPARDKAAGKRGPDRGSPEYRQRRERNNIAVRKSRDKAKRRNQEMQQKLVELSAENEKLQQRVEQLTRDLAGLRRFFKQLPGAPFLPGAGAADAR.

Disordered regions lie at residues 1-42 (MTCA…AAPA), 91-121 (GGPA…PGSL), and 138-206 (PAAQ…QEMQ). Lys107 is covalently cross-linked (Glycyl lysine isopeptide (Lys-Gly) (interchain with G-Cter in SUMO)). Over residues 141–161 (QPTPPASPDPPRRSPAPPAPG) the composition is skewed to pro residues. The span at 163–187 (ARDKAAGKRGPDRGSPEYRQRRERN) shows a compositional bias: basic and acidic residues. The bZIP domain occupies 177–240 (SPEYRQRRER…AGLRRFFKQL (64 aa)). Residues 181–208 (RQRRERNNIAVRKSRDKAKRRNQEMQQK) are basic motif. The tract at residues 212–240 (LSAENEKLQQRVEQLTRDLAGLRRFFKQL) is leucine-zipper.

Belongs to the bZIP family. C/EBP subfamily. Binds DNA as a homodimer and as a heterodimer. Can form stable heterodimers with CEBPA, CEBPB and CEBPE. Directly interacts with SPI1/PU.1; this interaction does not affect DNA-binding properties of each partner. Interacts with PRDM16.

The protein localises to the nucleus. Its function is as follows. Transcription activator that recognizes two different DNA motifs: the CCAAT homology common to many promoters and the enhanced core homology common to many enhancers. Important transcription factor regulating the expression of genes involved in immune and inflammatory responses. Transcriptional activator that enhances IL6 transcription alone and as heterodimer with CEBPB. In Ovis aries (Sheep), this protein is CCAAT/enhancer-binding protein delta (CEBPD).